The following is a 371-amino-acid chain: Putative transport protein YtvI (371 aa).

Transmembrane regions (helical) follow at residues isoleucine 6 to alanine 26, phenylalanine 30 to valine 50, valine 65 to alanine 85, phenylalanine 168 to phenylalanine 188, glycine 225 to leucine 245, isoleucine 256 to valine 276, serine 283 to isoleucine 303, isoleucine 312 to phenylalanine 332, and leucine 334 to isoleucine 354.

Belongs to the autoinducer-2 exporter (AI-2E) (TC 2.A.86) family.

Its subcellular location is the cell membrane. This Bacillus subtilis (strain 168) protein is Putative transport protein YtvI (ytvI).